A 446-amino-acid polypeptide reads, in one-letter code: Dimethylsulfoniopropionate lyase DddP (446 aa).

A compositionally biased stretch (basic and acidic residues) spans 1 to 13; that stretch reads MNQHYSETRKIDP. The segment at 1–30 is disordered; that stretch reads MNQHYSETRKIDPSRGATLGDNTPNDNNRI. Asp-295, Asp-297, Asp-307, His-371, Glu-406, and Glu-421 together coordinate a divalent metal cation.

This sequence belongs to the peptidase M24B family. In terms of assembly, homodimer. A divalent metal cation serves as cofactor.

It catalyses the reaction S,S-dimethyl-beta-propiothetin = acrylate + dimethyl sulfide + H(+). Able to cleave dimethylsulfoniopropionate (DMSP), releasing dimethyl sulfide (DMS). DMS is the principal form by which sulfur is transported from oceans to the atmosphere. The real activity of the protein is however subject to debate and it is unclear whether it constitutes a real dimethylsulfoniopropionate lyase in vivo: the low activity with DMSP as substrate suggests that DMSP is not its native substrate. This Roseovarius nubinhibens (strain ATCC BAA-591 / DSM 15170 / ISM) protein is Dimethylsulfoniopropionate lyase DddP.